The sequence spans 154 residues: Protein X (154 aa).

Positions 28-50 are disordered; sequence RPLPGPLGAVPPSSPSAVPADDG. Residues 33-48 are compositionally biased toward low complexity; the sequence is PLGAVPPSSPSAVPAD. Residues 68–117 are mitochondrial targeting sequence; that stretch reads PCALRFTSARRMETTVNAPWSLPTVLHKRTLGLSGWSMTWIEEYIKDCVF.

This sequence belongs to the orthohepadnavirus protein X family. In terms of assembly, may form homodimer. May interact with host CEBPA, CFLAR, CREB1, DDB1, E4F1, HBXIP, HSPD1/HSP60, NFKBIA, POLR2E and SMAD4. Interacts with host SMC5-SMC6 complex and induces its degradation. Interacts with host TRPC4AP; leading to prevent ubiquitination of TRPC4AP. Interacts with host PLSCR1; this interaction promotes ubiquitination and degradation of HBx and impairs HBx-mediated cell proliferation. Post-translationally, a fraction may be phosphorylated in insect cells and HepG2 cells, a human hepatoblastoma cell line. Phosphorylated in vitro by host protein kinase C or mitogen-activated protein kinase. N-acetylated in insect cells.

The protein localises to the host cytoplasm. Its subcellular location is the host nucleus. It localises to the host mitochondrion. Multifunctional protein that plays a role in silencing host antiviral defenses and promoting viral transcription. Does not seem to be essential for HBV infection. May be directly involved in development of cirrhosis and liver cancer (hepatocellular carcinoma). Most of cytosolic activities involve modulation of cytosolic calcium. The effect on apoptosis is controversial depending on the cell types in which the studies have been conducted. May induce apoptosis by localizing in mitochondria and causing loss of mitochondrial membrane potential. May also modulate apoptosis by binding host CFLAR, a key regulator of the death-inducing signaling complex (DISC). Promotes viral transcription by using the host E3 ubiquitin ligase DDB1 to target the SMC5-SMC6 complex to proteasomal degradation. This host complex would otherwise bind to viral episomal DNA, and prevents its transcription. Moderately stimulates transcription of many different viral and cellular transcription elements. Promoters and enhancers stimulated by HBx contain DNA binding sites for NF-kappa-B, AP-1, AP-2, c-EBP, ATF/CREB, or the calcium-activated factor NF-AT. The chain is Protein X from Homo sapiens (Human).